We begin with the raw amino-acid sequence, 105 residues long: Putative thioredoxin-5 (105 aa).

Residues 1 to 104 (MYKEPKNESE…VALENMVKKL (104 aa)) form the Thioredoxin domain. Residues Cys-30 and Cys-33 each act as nucleophile in the active site. A disulfide bridge links Cys-30 with Cys-33.

It belongs to the thioredoxin family.

Participates in various redox reactions through the reversible oxidation of its active center dithiol to a disulfide and catalyzes dithiol-disulfide exchange reactions. The sequence is that of Putative thioredoxin-5 (trxE) from Dictyostelium discoideum (Social amoeba).